Here is a 332-residue protein sequence, read N- to C-terminus: Tetraacyldisaccharide 4'-kinase (332 aa).

52-59 contributes to the ATP binding site; it reads TLGGAGKT.

This sequence belongs to the LpxK family.

It catalyses the reaction a lipid A disaccharide + ATP = a lipid IVA + ADP + H(+). The protein operates within glycolipid biosynthesis; lipid IV(A) biosynthesis; lipid IV(A) from (3R)-3-hydroxytetradecanoyl-[acyl-carrier-protein] and UDP-N-acetyl-alpha-D-glucosamine: step 6/6. Functionally, transfers the gamma-phosphate of ATP to the 4'-position of a tetraacyldisaccharide 1-phosphate intermediate (termed DS-1-P) to form tetraacyldisaccharide 1,4'-bis-phosphate (lipid IVA). This Methylobacterium sp. (strain 4-46) protein is Tetraacyldisaccharide 4'-kinase.